Reading from the N-terminus, the 94-residue chain is Exodeoxyribonuclease 7 small subunit (94 aa).

This sequence belongs to the XseB family. In terms of assembly, heterooligomer composed of large and small subunits.

It localises to the cytoplasm. The enzyme catalyses Exonucleolytic cleavage in either 5'- to 3'- or 3'- to 5'-direction to yield nucleoside 5'-phosphates.. Functionally, bidirectionally degrades single-stranded DNA into large acid-insoluble oligonucleotides, which are then degraded further into small acid-soluble oligonucleotides. The sequence is that of Exodeoxyribonuclease 7 small subunit from Trichormus variabilis (strain ATCC 29413 / PCC 7937) (Anabaena variabilis).